The following is a 305-amino-acid chain: tRNA pseudouridine synthase B (305 aa).

Asp-41 functions as the Nucleophile in the catalytic mechanism.

The protein belongs to the pseudouridine synthase TruB family. Type 1 subfamily.

The enzyme catalyses uridine(55) in tRNA = pseudouridine(55) in tRNA. In terms of biological role, responsible for synthesis of pseudouridine from uracil-55 in the psi GC loop of transfer RNAs. In Prochlorococcus marinus (strain MIT 9515), this protein is tRNA pseudouridine synthase B.